A 309-amino-acid chain; its full sequence is Aspartate carbamoyltransferase catalytic subunit (309 aa).

2 residues coordinate carbamoyl phosphate: arginine 48 and threonine 49. Lysine 76 is a binding site for L-aspartate. Carbamoyl phosphate is bound by residues arginine 98, histidine 128, and glutamine 131. The L-aspartate site is built by arginine 161 and arginine 211. Carbamoyl phosphate-binding residues include alanine 250 and proline 251.

Belongs to the aspartate/ornithine carbamoyltransferase superfamily. ATCase family. As to quaternary structure, heterododecamer (2C3:3R2) of six catalytic PyrB chains organized as two trimers (C3), and six regulatory PyrI chains organized as three dimers (R2).

The catalysed reaction is carbamoyl phosphate + L-aspartate = N-carbamoyl-L-aspartate + phosphate + H(+). It participates in pyrimidine metabolism; UMP biosynthesis via de novo pathway; (S)-dihydroorotate from bicarbonate: step 2/3. In terms of biological role, catalyzes the condensation of carbamoyl phosphate and aspartate to form carbamoyl aspartate and inorganic phosphate, the committed step in the de novo pyrimidine nucleotide biosynthesis pathway. In Oceanobacillus iheyensis (strain DSM 14371 / CIP 107618 / JCM 11309 / KCTC 3954 / HTE831), this protein is Aspartate carbamoyltransferase catalytic subunit.